The sequence spans 58 residues: Small ribosomal subunit protein bS21 (58 aa).

Residues 34–58 (KREHYEKPSVKRKKKSEAARKRKFK) are disordered. A compositionally biased stretch (basic residues) spans 43–58 (VKRKKKSEAARKRKFK).

It belongs to the bacterial ribosomal protein bS21 family.

This chain is Small ribosomal subunit protein bS21, found in Clostridium acetobutylicum (strain ATCC 824 / DSM 792 / JCM 1419 / IAM 19013 / LMG 5710 / NBRC 13948 / NRRL B-527 / VKM B-1787 / 2291 / W).